Consider the following 379-residue polypeptide: Cytochrome b (379 aa).

A run of 4 helical transmembrane segments spans residues 33–53 (FGSL…FLAM), 77–98 (WLIR…FIHV), 113–133 (WNIG…GYVL), and 178–198 (FFAF…VHLL). The heme b site is built by His-83 and His-97. 2 residues coordinate heme b: His-182 and His-196. His-201 lines the a ubiquinone pocket. Transmembrane regions (helical) follow at residues 226 to 246 (IKDL…ALFF), 288 to 308 (LGGV…PLLN), 320 to 340 (VTQT…WIGG), and 347 to 367 (FTMI…ILIP).

It belongs to the cytochrome b family. As to quaternary structure, the cytochrome bc1 complex contains 11 subunits: 3 respiratory subunits (MT-CYB, CYC1 and UQCRFS1), 2 core proteins (UQCRC1 and UQCRC2) and 6 low-molecular weight proteins (UQCRH/QCR6, UQCRB/QCR7, UQCRQ/QCR8, UQCR10/QCR9, UQCR11/QCR10 and a cleavage product of UQCRFS1). This cytochrome bc1 complex then forms a dimer. Requires heme b as cofactor.

It is found in the mitochondrion inner membrane. Component of the ubiquinol-cytochrome c reductase complex (complex III or cytochrome b-c1 complex) that is part of the mitochondrial respiratory chain. The b-c1 complex mediates electron transfer from ubiquinol to cytochrome c. Contributes to the generation of a proton gradient across the mitochondrial membrane that is then used for ATP synthesis. The sequence is that of Cytochrome b (MT-CYB) from Akodon philipmyersi (Myers' grass mouse).